The chain runs to 81 residues: Photosystem I iron-sulfur center (81 aa).

2 4Fe-4S ferredoxin-type domains span residues serine 2 to tryptophan 31 and isoleucine 39 to tyrosine 68. 8 residues coordinate [4Fe-4S] cluster: cysteine 11, cysteine 14, cysteine 17, cysteine 21, cysteine 48, cysteine 51, cysteine 54, and cysteine 58.

As to quaternary structure, the eukaryotic PSI reaction center is composed of at least 11 subunits. Requires [4Fe-4S] cluster as cofactor.

It is found in the plastid. It localises to the chloroplast thylakoid membrane. It catalyses the reaction reduced [plastocyanin] + hnu + oxidized [2Fe-2S]-[ferredoxin] = oxidized [plastocyanin] + reduced [2Fe-2S]-[ferredoxin]. Apoprotein for the two 4Fe-4S centers FA and FB of photosystem I (PSI); essential for photochemical activity. FB is the terminal electron acceptor of PSI, donating electrons to ferredoxin. The C-terminus interacts with PsaA/B/D and helps assemble the protein into the PSI complex. Required for binding of PsaD and PsaE to PSI. PSI is a plastocyanin-ferredoxin oxidoreductase, converting photonic excitation into a charge separation, which transfers an electron from the donor P700 chlorophyll pair to the spectroscopically characterized acceptors A0, A1, FX, FA and FB in turn. This chain is Photosystem I iron-sulfur center, found in Vitis vinifera (Grape).